A 376-amino-acid chain; its full sequence is Transcription factor Sp6 (376 aa).

Positions 1 to 70 are disordered; sequence MLTAVCGSLG…VDFSQGYELP (70 aa). The 9aaTAD motif lies at 118-126; the sequence is GSWWDLHPG. Residues 164-224 form a disordered region; it reads PPPHPHPHHL…SRRSVPRSSG (61 aa). 3 C2H2-type zinc fingers span residues 254–278, 284–308, and 314–336; these read HNCH…LRWH, FVCN…LQTH, and FPCA…MKTH. The span at 334–343 shows a compositional bias: basic and acidic residues; that stretch reads KTHEGAKEEA. Residues 334–376 are disordered; that stretch reads KTHEGAKEEAAAAAQGEGKAGGVVEPPGGKGKREAEGSSASSN. The segment covering 344–360 has biased composition (low complexity); that stretch reads AAAAQGEGKAGGVVEPP.

The protein belongs to the Sp1 C2H2-type zinc-finger protein family. As to expression, ubiquitous. Preferentially expressed by proliferating epithelial cells of teeth, hair follicles and limbs.

Its subcellular location is the nucleus. Functionally, promotes cell proliferation. Plays a role in tooth germ growth. Plays a role in the control of enamel mineralization. Binds the AMBN promoter. This is Transcription factor Sp6 (Sp6) from Mus musculus (Mouse).